A 588-amino-acid chain; its full sequence is D-3-phosphoglycerate dehydrogenase 3, chloroplastic (588 aa).

The N-terminal 38 residues, 1–38, are a transit peptide targeting the chloroplast; it reads MATSLNLSSIFSSSSRLVTTPSSVFPIRQRRRIILVTS. NAD(+) is bound by residues 195 to 196, Asp-215, 274 to 276, and Asp-300; these read KV and VAR. Arg-276 is a catalytic residue. Residue Glu-305 is part of the active site. His-324 functions as the Proton donor in the catalytic mechanism. 324–327 provides a ligand contact to NAD(+); that stretch reads HLGA. The 73-residue stretch at 516-588 folds into the ACT domain; it reads VILCRQVDQP…AIEEFVFLKL (73 aa).

Belongs to the D-isomer specific 2-hydroxyacid dehydrogenase family. As to expression, expressed in aerial parts. Not detected in roots and meristematic tissue. Expressed in cotyledons, adult leaves, stigma and anther filaments. Detected in the embryo.

The protein localises to the plastid. Its subcellular location is the chloroplast. It carries out the reaction (2R)-3-phosphoglycerate + NAD(+) = 3-phosphooxypyruvate + NADH + H(+). It participates in amino-acid biosynthesis; L-serine biosynthesis; L-serine from 3-phospho-D-glycerate: step 1/3. Its activity is regulated as follows. Partially inhibited by 1 mM serine. In terms of biological role, involved in the plastidial phosphorylated pathway of serine biosynthesis (PPSB). This is D-3-phosphoglycerate dehydrogenase 3, chloroplastic (PGDH3) from Arabidopsis thaliana (Mouse-ear cress).